We begin with the raw amino-acid sequence, 421 residues long: UDP-N-acetylglucosamine 1-carboxyvinyltransferase (421 aa).

K22–N23 is a phosphoenolpyruvate binding site. Position 95 (R95) interacts with UDP-N-acetyl-alpha-D-glucosamine. Residue C119 is the Proton donor of the active site. 2-(S-cysteinyl)pyruvic acid O-phosphothioketal is present on C119. Residues R124–Q128, D309, and I331 contribute to the UDP-N-acetyl-alpha-D-glucosamine site.

Belongs to the EPSP synthase family. MurA subfamily.

It is found in the cytoplasm. It carries out the reaction phosphoenolpyruvate + UDP-N-acetyl-alpha-D-glucosamine = UDP-N-acetyl-3-O-(1-carboxyvinyl)-alpha-D-glucosamine + phosphate. It participates in cell wall biogenesis; peptidoglycan biosynthesis. Its function is as follows. Cell wall formation. Adds enolpyruvyl to UDP-N-acetylglucosamine. In Leptothrix cholodnii (strain ATCC 51168 / LMG 8142 / SP-6) (Leptothrix discophora (strain SP-6)), this protein is UDP-N-acetylglucosamine 1-carboxyvinyltransferase.